The chain runs to 355 residues: Biotin synthase (355 aa).

Positions 51 to 275 (NTVKVNYLVN…VCPDKEIRIA (225 aa)) constitute a Radical SAM core domain. [4Fe-4S] cluster contacts are provided by Cys66, Cys70, and Cys73. The [2Fe-2S] cluster site is built by Cys110, Cys143, Cys203, and Arg273.

Belongs to the radical SAM superfamily. Biotin synthase family. In terms of assembly, homodimer. Requires [4Fe-4S] cluster as cofactor. The cofactor is [2Fe-2S] cluster.

It catalyses the reaction (4R,5S)-dethiobiotin + (sulfur carrier)-SH + 2 reduced [2Fe-2S]-[ferredoxin] + 2 S-adenosyl-L-methionine = (sulfur carrier)-H + biotin + 2 5'-deoxyadenosine + 2 L-methionine + 2 oxidized [2Fe-2S]-[ferredoxin]. It functions in the pathway cofactor biosynthesis; biotin biosynthesis; biotin from 7,8-diaminononanoate: step 2/2. Functionally, catalyzes the conversion of dethiobiotin (DTB) to biotin by the insertion of a sulfur atom into dethiobiotin via a radical-based mechanism. The sequence is that of Biotin synthase from Saccharopolyspora erythraea (strain ATCC 11635 / DSM 40517 / JCM 4748 / NBRC 13426 / NCIMB 8594 / NRRL 2338).